The sequence spans 245 residues: MSQSTSVFRRNGFTFKQFFVAHDRCAMKVGTDGILLGAWAPVAGVKRCLDIGAGSGLLALMLAQRTDDSVMIDAVELESEAAAQAQENINQSPWAERINVHTADILQWITQQTVRFDLIISNPPYYQQGVECATPQREQARYTTTLDHPSLLTCAAECITEEGFFCVVLPEQIGNGFTELALSMGWHLRLRTDVAENEARLPHRVLLAFSPQAGECFSDRLVIRGPDQNYSEAYTALTQAFYLFM.

The protein belongs to the methyltransferase superfamily. tRNA (adenine-N(6)-)-methyltransferase family.

The protein localises to the cytoplasm. It carries out the reaction adenosine(37) in tRNA1(Val) + S-adenosyl-L-methionine = N(6)-methyladenosine(37) in tRNA1(Val) + S-adenosyl-L-homocysteine + H(+). Its function is as follows. Specifically methylates the adenine in position 37 of tRNA(1)(Val) (anticodon cmo5UAC). This chain is tRNA1(Val) (adenine(37)-N6)-methyltransferase, found in Escherichia coli (strain UTI89 / UPEC).